Consider the following 663-residue polypeptide: MKDLFKIYSNYQPAGDQPTAIASLIDGLESGLAKQTLLGVTGSGKTFTIAHVIQAMKRPTLIMAPNKTLAAQLYGEFKAFFPDNAVEYFVSYYDYYQPEAYVPASDTFIEKDASINEHIEQMRLSATKALIERKDAIIVATVSAIYGLGDPDSYLRMLLHLSRGEQSDQRKILKRLAEMQYTRTNLSLERGQFRVHGDVIDIFPADSEKEAIRIELFDDEVDNIARFDPLTGEILQRLPRVTIFPKTHYVTPRERILETVEKVKVELQERLAELNAQNKLVEAQRLEQRTCFDIEMMLELGYCSGIENYSRYLSNREAGEAPPTLFDYLPPEALLIIDESHVTVPQIGGMYRGDRARKETLVNYGFRLPSALDNRPLRFEEFEERSPQTIYISATPGPYEQEHSDNVAEQVVRPTGLIDPEVEIRPVKTQVDDLMSEIRQVIAQGSRILVTTLTKRMAEDLTEYLSEHGIKVRYLHSDVDTVERMEIIRDLRLGEFDVLVGINLLREGLDMPEVALVAILDADKEGFLRSERSLIQTIGRAARNVKGRAILYADTMTGSMQRALTETERRREKQKAFNLKHGITPKGINKSVEDILEGAYIGKRKTMVAEQAPRYTHWSPQELAKEINALEKQMYAHAQNMEFELAAKIRDEYLLLKEQLMKI.

The Helicase ATP-binding domain occupies 26–414 (DGLESGLAKQ…DNVAEQVVRP (389 aa)). 39 to 46 (GVTGSGKT) is a binding site for ATP. Positions 92-115 (YYDYYQPEAYVPASDTFIEKDASI) match the Beta-hairpin motif. The region spanning 430–596 (QVDDLMSEIR…GINKSVEDIL (167 aa)) is the Helicase C-terminal domain. Residues 624 to 659 (AKEINALEKQMYAHAQNMEFELAAKIRDEYLLLKEQ) enclose the UVR domain.

The protein belongs to the UvrB family. In terms of assembly, forms a heterotetramer with UvrA during the search for lesions. Interacts with UvrC in an incision complex.

It is found in the cytoplasm. Functionally, the UvrABC repair system catalyzes the recognition and processing of DNA lesions. A damage recognition complex composed of 2 UvrA and 2 UvrB subunits scans DNA for abnormalities. Upon binding of the UvrA(2)B(2) complex to a putative damaged site, the DNA wraps around one UvrB monomer. DNA wrap is dependent on ATP binding by UvrB and probably causes local melting of the DNA helix, facilitating insertion of UvrB beta-hairpin between the DNA strands. Then UvrB probes one DNA strand for the presence of a lesion. If a lesion is found the UvrA subunits dissociate and the UvrB-DNA preincision complex is formed. This complex is subsequently bound by UvrC and the second UvrB is released. If no lesion is found, the DNA wraps around the other UvrB subunit that will check the other stand for damage. In Legionella pneumophila (strain Paris), this protein is UvrABC system protein B.